The primary structure comprises 424 residues: CinA-like protein (424 aa).

This sequence belongs to the CinA family.

This is CinA-like protein from Syntrophobacter fumaroxidans (strain DSM 10017 / MPOB).